An 854-amino-acid chain; its full sequence is Espin (854 aa).

ANK repeat units follow at residues 1 to 31, 35 to 64, 69 to 99, 103 to 133, 137 to 167, 171 to 201, 205 to 235, 239 to 268, and 271 to 300; these read MALE…GPSL, LDAL…LPAA, NGAT…RVQD, SGAT…DPTA, MGAL…GVNA, NGAT…DPHA, DGMT…SLSE, DGAT…EISA, and WGGT…ELDV. 2 positions are modified to phosphoserine: S338 and S342. Residues 338–349 show a composition bias toward basic and acidic residues; the sequence is SRDPSAELEAKQ. 5 disordered regions span residues 338–400, 415–474, 487–713, 765–788, and 800–832; these read SRDP…CGLS, NPEL…MQTK, KELS…AGFQ, KMQE…SMPA, and EERE…TLGY. Positions 352 to 377 are enriched in polar residues; that stretch reads SGMSSPNTTVSVQPLNFDLSSPTSTL. Residues 378-389 show a composition bias toward low complexity; sequence SNYDSCSSSHSS. A compositionally biased stretch (pro residues) spans 428–463; sequence PTPPPPPPSFPPPPPPPGTQLPPPPPGYPAPKPPVG. Basic and acidic residues predominate over residues 487–505; sequence KELSSCDGHDGLRRQDSSR. S515 carries the phosphoserine modification. Pro residues predominate over residues 595 to 620; the sequence is LPPPPPPPPPPLPEAASSPPPAPPLP. The span at 633 to 642 shows a compositional bias: low complexity; sequence SSSSTGSTKS. Polar residues-rich tracts occupy residues 643 to 652 and 667 to 678; these read FNMMSPTGDN and PTPQSKGLTTVF. S647 is modified (phosphoserine). In terms of domain architecture, WH2 spans 651–668; it reads DNSELLAEIKAGKSLKPT. Phosphoserine is present on residues S690 and S696. The segment covering 692 to 703 has biased composition (low complexity); it reads LPSVSPALSPVR. Residues 756-830 are a coiled coil; that stretch reads QVMVRKMQLK…KEQSEKLRTL (75 aa).

As to quaternary structure, monomer. Binds F-actin in a Ca(2+)-resistant fashion. Interacts (via N-terminus) with BAIAP2 (via SH3-domain). Interacts with PFN2. Interacts with MYO3A (via C-terminus). Interacts with MYO3B (via C-terminus).

The protein resides in the cytoplasm. It is found in the cytoskeleton. Its subcellular location is the cell projection. It localises to the stereocilium. The protein localises to the microvillus. Functionally, multifunctional actin-bundling protein. Plays a major role in regulating the organization, dimension, dynamics and signaling capacities of the actin filament-rich microvilli in the mechanosensory and chemosensory cells. Required for the assembly and stabilization of the stereociliary parallel actin bundles. Plays a crucial role in the formation and maintenance of inner ear hair cell stereocilia. Involved in the elongation of actin in stereocilia. In extrastriolar hair cells, required for targeting MYO3B to stereocilia tips, and for regulation of stereocilia diameter and staircase formation. The chain is Espin (ESPN) from Homo sapiens (Human).